Consider the following 68-residue polypeptide: Protein transport protein Sec61 subunit gamma (68 aa).

The Cytoplasmic segment spans residues 1 to 32 (MDQVMQFVEPSRQFVKDSIRLVKRCTKPDRKE). A helical membrane pass occupies residues 33–61 (FQKVAMATAIGFAIMGFIGFFVKLIHIPI). The Extracellular segment spans residues 62–68 (NNIIVGG).

Belongs to the SecE/SEC61-gamma family. In terms of assembly, the SEC61 channel-forming translocon complex consists of channel-forming core components SEC61A1, SEC61B and SEC61G and different auxiliary components such as SEC62 and SEC63. The SEC61 channel associates with the multi-pass translocon (MPT) complex.

The protein resides in the endoplasmic reticulum membrane. Functionally, component of SEC61 channel-forming translocon complex that mediates transport of signal peptide-containing precursor polypeptides across the endoplasmic reticulum (ER). Forms a ribosome receptor and a gated pore in the ER membrane, both functions required for cotranslational translocation of nascent polypeptides. The SEC61 channel is also involved in ER membrane insertion of transmembrane proteins: it mediates membrane insertion of the first few transmembrane segments of proteins, while insertion of subsequent transmembrane regions of multi-pass membrane proteins is mediated by the multi-pass translocon (MPT) complex. This Harpagifer antarcticus (Antarctic spiny plunderfish) protein is Protein transport protein Sec61 subunit gamma (sec61g).